Reading from the N-terminus, the 64-residue chain is Bacteriocin glycocin F (64 aa).

The N-terminal stretch at 1–21 (MSKLVKTLTISEISKAQNNGG) is a signal peptide. Disulfide bonds link Cys-26-Cys-49 and Cys-33-Cys-42. The O-linked (GlcNAc) serine glycan is linked to Ser-39. A glycan (S-linked (GlcNAc) cysteine) is linked at Cys-64.

It is found in the secreted. Its function is as follows. Has antibacterial activity against L.plantarum ATCC 8014. In purified form, the activity is bacteriostatic (IC(50)=2 nM) rather than bactericidal. The chain is Bacteriocin glycocin F from Lactiplantibacillus plantarum (Lactobacillus plantarum).